The following is a 389-amino-acid chain: Allantoicase (389 aa).

It belongs to the allantoicase family.

The enzyme catalyses allantoate + H2O = (S)-ureidoglycolate + urea. Its pathway is nitrogen metabolism; (S)-allantoin degradation; (S)-ureidoglycolate from allantoate (aminidohydrolase route): step 1/1. Functionally, utilization of purines as secondary nitrogen sources, when primary sources are limiting. This Xenopus tropicalis (Western clawed frog) protein is Allantoicase (allc).